Reading from the N-terminus, the 396-residue chain is D-alanine--D-alanine ligase (396 aa).

An ATP-grasp domain is found at 141 to 347 (KMLWQAAGLP…PQDLMAQLLS (207 aa)). 174 to 229 (ETRLGYPLFVKPAQAGSSVGASAVQTRAPLIPAIEAAFQWDEVVLVERYVRAREIE) contributes to the ATP binding site. Mg(2+) is bound by residues Asp-301, Glu-314, and Asn-316. The disordered stretch occupies residues 374-396 (AAHDPDAQGDDWDQRDSNPLPTA).

This sequence belongs to the D-alanine--D-alanine ligase family. Mg(2+) serves as cofactor. Mn(2+) is required as a cofactor.

The protein resides in the cytoplasm. The catalysed reaction is 2 D-alanine + ATP = D-alanyl-D-alanine + ADP + phosphate + H(+). Its pathway is cell wall biogenesis; peptidoglycan biosynthesis. In terms of biological role, cell wall formation. This chain is D-alanine--D-alanine ligase, found in Treponema pallidum (strain Nichols).